A 615-amino-acid polypeptide reads, in one-letter code: Erythritol-mannosyl-transferase 1 (615 aa).

Residues 366-387 (RTPNNTGASTPTAPISSPDFEE) are disordered. The span at 367-380 (TPNNTGASTPTAPI) shows a compositional bias: polar residues.

This sequence belongs to the UDP-glycosyltransferase family.

The protein resides in the vacuole membrane. Its pathway is secondary metabolite biosynthesis. In terms of biological role, erythritol-mannosyl-transferase; part of the gene cluster that mediates the biosynthesis of mannosylerythritol lipids (MELs), surface-active substances that enhance the availability of water-insoluble substrates. Mannosylerythritol lipid production is responsible for hemolytic activity of Ustilago maydis. Depending on the number of acetyl groups, mannosylerythritol lipids can be differentiated into MEL A (fully acetylated), MEL B and MEL C (monoacetylated at R-6 and R-4, respectively), and the fully deacetylated MEL D. The first step in the pathway is the generation of mannosylerythritol by the glycosyltransferase EMT1 which catalyzes the transfer of GDP-mannose to the C-4 atom of meso-erythritol. This reaction has to be stereospecific, since only mannosyl-D-erythritol is generated. The produced disaccharide is subsequently acylated with fatty acids of various lengths derived from the peroxisomal beta-oxidation by the peroxisomal acyltransferases MAC1 and MAC2 at positions C-2 and C-3, repectively. The existence of MEL derivatives which carry an acetyl group at C-2 implies that at least MAC1 also accepts acetyl-CoA as a donor. The final step of MEL biosynthesis is the acetylation of the fully acylated mannosylerythritol lipids catalyzed by the acetyl-CoA-dependent acetyltransferase MAT1. MAT1 displays a relaxed regioselectivity and is able to transfer acetylgroups to both positions C-4 and C-6 of the mannosyl moiety. The chain is Erythritol-mannosyl-transferase 1 from Mycosarcoma maydis (Corn smut fungus).